Reading from the N-terminus, the 699-residue chain is Long-chain-fatty-acid--CoA ligase 1 (699 aa).

Position 1 is an N-acetylmethionine (Met1). Tyr9 is modified (3'-nitrotyrosine). The helical; Signal-anchor for type III membrane protein transmembrane segment at 25-45 threads the bilayer; that stretch reads LPTNTLMGFGAFAALTTFWYA. Topologically, residues 46-699 are cytoplasmic; sequence TRPKALKPPC…IDELYATIKI (654 aa). Residue Tyr85 is modified to Phosphotyrosine. A 3'-nitrotyrosine modification is found at Tyr86. The O-linked (GlcNAc) serine glycan is linked to Ser136. N6-acetyllysine occurs at positions 208, 357, and 387. Ser621 bears the Phosphoserine mark. Lys633 carries the N6-acetyllysine modification.

This sequence belongs to the ATP-dependent AMP-binding enzyme family. Mg(2+) is required as a cofactor.

It is found in the mitochondrion outer membrane. Its subcellular location is the peroxisome membrane. The protein localises to the microsome membrane. The protein resides in the endoplasmic reticulum membrane. The catalysed reaction is a long-chain fatty acid + ATP + CoA = a long-chain fatty acyl-CoA + AMP + diphosphate. It catalyses the reaction (5Z,8Z,11Z,14Z)-eicosatetraenoate + ATP + CoA = (5Z,8Z,11Z,14Z)-eicosatetraenoyl-CoA + AMP + diphosphate. The enzyme catalyses 3,7,11,15-tetramethylhexadecanoate + ATP + CoA = phytanoyl-CoA + AMP + diphosphate. It carries out the reaction hexadecanoate + ATP + CoA = hexadecanoyl-CoA + AMP + diphosphate. The catalysed reaction is (E)-hexadec-2-enoate + ATP + CoA = (2E)-hexadecenoyl-CoA + AMP + diphosphate. It catalyses the reaction 2,6,10,14-tetramethylpentadecanoate + ATP + CoA = pristanoyl-CoA + AMP + diphosphate. The enzyme catalyses 14,15-epoxy-(5Z,8Z,11Z)-eicosatrienoate + ATP + CoA = 14,15-epoxy-(5Z,8Z,11Z)-eicosatrienoyl-CoA + AMP + diphosphate. It carries out the reaction 5-hydroxy-(6E,8Z,11Z,14Z)-eicosatetraenoate + ATP + CoA = 5-hydroxy-(6E,8Z,11Z,14Z)-eicosatetraenoyl-CoA + AMP + diphosphate. The catalysed reaction is 12-hydroxy-(5Z,8Z,10E,14Z)-eicosatetraenoate + ATP + CoA = 12-hydroxy-(5Z,8Z,10E,14Z)-eicosatetraenoyl-CoA + AMP + diphosphate. It catalyses the reaction 15-hydroxy-(5Z,8Z,11Z,13E)-eicosatetraenoate + ATP + CoA = 15-hydroxy-(5Z,8Z,11Z,13E)-eicosatetraenoyl-CoA + AMP + diphosphate. The enzyme catalyses (9Z)-octadecenoate + ATP + CoA = (9Z)-octadecenoyl-CoA + AMP + diphosphate. With respect to regulation, inhibited at high temperature and by arachidonate. Its function is as follows. Catalyzes the conversion of long-chain fatty acids to their active form acyl-CoAs for both synthesis of cellular lipids, and degradation via beta-oxidation. Preferentially uses palmitoleate, oleate and linoleate. Preferentially activates arachidonate than epoxyeicosatrienoic acids (EETs) or hydroxyeicosatrienoic acids (HETEs). The chain is Long-chain-fatty-acid--CoA ligase 1 from Mus musculus (Mouse).